Here is a 3391-residue protein sequence, read N- to C-terminus: Genome polyprotein (3391 aa).

Positions 1–15 (MNDQRKEAKNTPFNM) are interaction with host EXOC1. The Cytoplasmic portion of the chain corresponds to 1 to 101 (MNDQRKEAKN…LNILNRRRRS (101 aa)). Residues 37 to 72 (MLQGRGPLKLYMALVAFLRFLTIPPTAGILKRWGTI) form a hydrophobic; homodimerization of capsid protein C region. Residues 101–114 (SAGMIIMLIPTVMA) constitute a propeptide, ER anchor for the Capsid protein C, removed in mature form by serine protease NS3. A propeptide spans 101-114 (SAGMIIMLIPTVMA) (ER anchor for the capsid protein C, removed in mature form by serine protease NS3). A helical transmembrane segment spans residues 102–122 (AGMIIMLIPTVMAFHLTTRNG). Topologically, residues 123-242 (EPHMIVSRQE…HVQRIETWIL (120 aa)) are extracellular. Residue N183 is glycosylated (N-linked (GlcNAc...) asparagine; by host). Residues 243–260 (RHPGFTMMAAILAYTIGT) traverse the membrane as a helical segment. Residue T261 is a topological domain, cytoplasmic. The chain crosses the membrane as a helical span at residues 262 to 280 (HFQRALILILLTAVTPSMT). Over 281 to 727 (MRCIGMSNRD…QVFGAIYGAA (447 aa)) the chain is Extracellular. 4 cysteine pairs are disulfide-bonded: C283–C310, C340–C401, C354–C385, and C372–C396. N347 is a glycosylation site (N-linked (GlcNAc...) asparagine; by host). Residues 378–391 (DRGWGNGCGLFGKG) form a fusion peptide region. N-linked (GlcNAc...) asparagine; by host glycosylation occurs at N433. 2 disulfides stabilise this stretch: C465–C565 and C582–C613. The chain crosses the membrane as a helical span at residues 728–748 (FSGVSWTMKILIGVIITWIGM). The Cytoplasmic portion of the chain corresponds to 749–752 (NSRS). The chain crosses the membrane as a helical span at residues 753–773 (TSLSVTLVLVGIVTLYLGVMV). Over 774 to 1195 (QADSGCVVSW…MVGATMTDDI (422 aa)) the chain is Extracellular. Cystine bridges form between C779-C790, C830-C918, C954-C998, C1055-C1104, C1066-C1088, and C1087-C1091. Residues N905 and N982 are each glycosylated (N-linked (GlcNAc...) asparagine; by host). N-linked (GlcNAc...) asparagine; by host glycosylation occurs at N1134. A helical transmembrane segment spans residues 1196 to 1220 (GMGVTYLALLAAFKVRPTFAAGLLL). The Cytoplasmic portion of the chain corresponds to 1221 to 1226 (RKLTSK). A helical membrane pass occupies residues 1227 to 1245 (ELMMTTIGIVLSSQSTIPE). The Lumenal segment spans residues 1246 to 1269 (TILELTDALALGMMVLKMVRNMEK). Residues 1270 to 1290 (YQLAVTIMAILCVPNAVILQN) form a helical membrane-spanning segment. A1291 is a topological domain (cytoplasmic). A helical transmembrane segment spans residues 1292–1310 (WKVSCTILAVVSVSPLFLT). At 1311 to 1317 (SSQQKTD) the chain is on the lumenal side. The chain crosses the membrane as a helical span at residues 1318 to 1338 (WIPLALTIKGLNPTAIFLTTL). The Cytoplasmic segment spans residues 1339-1346 (SRTSKKRS). A helical transmembrane segment spans residues 1347-1367 (WPLNEAIMAVGMVSILASSLL). The Lumenal segment spans residues 1368–1370 (KND). Residues 1371 to 1391 (IPMTGPLVAGGLLTVCYVLTG) traverse the membrane as a helical segment. Residues 1392-1447 (RSADLELERAADVKWEDQAEISGSSPILSITISEDGSMSIKNEEEEQTLTILIRRG) are Cytoplasmic-facing. The tract at residues 1398-1437 (LERAADVKWEDQAEISGSSPILSITISEDGSMSIKNEEEE) is interacts with and activates NS3 protease. Positions 1448–1468 (LLVISGLFPVSIPITAAAWYL) form an intramembrane region, helical. Over 1469 to 2147 (WEVKKQRAGV…LSELPETLET (679 aa)) the chain is Cytoplasmic. The 178-residue stretch at 1476-1653 (AGVLWDVPSP…EKSIEDNPEI (178 aa)) folds into the Peptidase S7 domain. Residues H1526, D1550, and S1610 each act as charge relay system; for serine protease NS3 activity in the active site. Residues 1655-1811 (DDIFRKRRLT…QSNAPIIDEE (157 aa)) form the Helicase ATP-binding domain. The interval 1659 to 1662 (RKRR) is important for RNA-binding. 1668–1675 (LHPGAGKT) is a binding site for ATP. The DEAH box motif lies at 1759-1762 (DEAH). The region spanning 1821–1988 (SGHEWVTDFK…IIPSMFEPER (168 aa)) is the Helicase C-terminal domain. N6-acetyllysine; by host is present on K1863. A helical membrane pass occupies residues 2148–2168 (LLLLTLLATVTGGIFLFLMSA). Residues 2169–2170 (RG) lie on the Lumenal side of the membrane. Positions 2171–2191 (IGKMTLGMCCIITASILLWYA) form an intramembrane region, helical. Residue Q2192 is a topological domain, lumenal. A helical transmembrane segment spans residues 2193–2213 (IQPHWIAASIILEFFLIVLLI). Residues 2214–2228 (PEPEKQRTPQDNQLT) lie on the Cytoplasmic side of the membrane. A helical membrane pass occupies residues 2229 to 2249 (YVVIAILTVVAATMANEMGFL). Over 2250–2274 (EKTKKDLGLGSIATQQPESNILDID) the chain is Lumenal. Positions 2275-2295 (LRPASAWTLYAVATTFVTPML) form an intramembrane region, helical. At 2296–2316 (RHSIENSSVNVSLTAIANQAT) the chain is on the lumenal side. Residues N2301 and N2305 are each glycosylated (N-linked (GlcNAc...) asparagine; by host). An intramembrane region (helical) is located at residues 2317–2337 (VLMGLGKGWPLSKMDIGVPLL). At 2338-2347 (AIGCYSQVNP) the chain is on the lumenal side. Residues 2348-2368 (TTLTAALFLLVAHYAIIGPAL) form a helical membrane-spanning segment. The Cytoplasmic segment spans residues 2369–2413 (QAKASREAQKRAAAGIMKNPTVDGITVIDLDPIPYDPKFEKQLGQ). Residues 2414-2434 (VMLLVLCVTQVLMMRTTWALC) traverse the membrane as a helical segment. The Lumenal segment spans residues 2435-2459 (EALTLATGPISTLSEGNPGRFWNTT). N-linked (GlcNAc...) asparagine; by host glycosylation is present at N2457. Residues 2460 to 2480 (IAVSMANIFRGSYLAGAGLLF) traverse the membrane as a helical segment. At 2481–3391 (SIMKNTTNTR…REEEEAGVLW (911 aa)) the chain is on the cytoplasmic side. The mRNA cap 0-1 NS5-type MT domain maps to 2493–2755 (TGNIGETLGE…DVDLGSGTRN (263 aa)). S2547 serves as a coordination point for S-adenosyl-L-methionine. Phosphoserine is present on S2547. Residue K2552 is the For 2'-O-MTase activity of the active site. The SUMO-interacting motif signature appears at 2568–2571 (VVDL). Positions 2577, 2578, 2595, 2596, 2622, and 2623 each coordinate S-adenosyl-L-methionine. D2637 functions as the For 2'-O-MTase activity in the catalytic mechanism. I2638 serves as a coordination point for S-adenosyl-L-methionine. Catalysis depends on for 2'-O-MTase activity residues K2672 and E2708. An S-adenosyl-L-methionine-binding site is contributed by Y2710. Zn(2+)-binding residues include E2929, H2933, C2938, and C2941. The RdRp catalytic domain occupies 3020–3169 (AMYADDTAGW…PLDDRLPSAL (150 aa)). 3 residues coordinate Zn(2+): H3203, C3219, and C3338.

It in the N-terminal section; belongs to the class I-like SAM-binding methyltransferase superfamily. mRNA cap 0-1 NS5-type methyltransferase family. As to quaternary structure, homodimer. Interacts (via N-terminus) with host EXOC1 (via C-terminus); this interaction results in EXOC1 degradation through the proteasome degradation pathway. Forms heterodimers with envelope protein E in the endoplasmic reticulum and Golgi. In terms of assembly, homodimer; in the endoplasmic reticulum and Golgi. Interacts with protein prM. Interacts with non-structural protein 1. As to quaternary structure, homodimer; Homohexamer when secreted. Interacts with envelope protein E. Interacts with host PRKAA1. Interacts (via N-terminus) with serine protease NS3. In terms of assembly, forms a heterodimer with serine protease NS3. May form homooligomers. As to quaternary structure, forms a heterodimer with NS2B. Interacts with NS4B. Interacts with unphosphorylated RNA-directed RNA polymerase NS5; this interaction stimulates RNA-directed RNA polymerase NS5 guanylyltransferase activity. Interacts with host SHFL. Interacts with host MAVS; this interaction inhibits the synthesis of IFN-beta. Interacts with host SHFL. Interacts with host AUP1; the interaction occurs in the presence of Dengue virus NS4B and induces lipophagy which facilitates production of virus progeny particles. May interact with host SRPRA and SEC61G. In terms of assembly, interacts with serine protease NS3. As to quaternary structure, homodimer. Interacts with host STAT2; this interaction inhibits the phosphorylation of the latter, and, when all viral proteins are present (polyprotein), targets STAT2 for degradation. Interacts with serine protease NS3. Interacts with host PAF1 complex; the interaction may prevent the recruitment of the PAF1 complex to interferon-responsive genes, and thus reduces the immune response. Specific enzymatic cleavages in vivo yield mature proteins. Cleavages in the lumen of endoplasmic reticulum are performed by host signal peptidase, whereas cleavages in the cytoplasmic side are performed by serine protease NS3. Signal cleavage at the 2K-4B site requires a prior NS3 protease-mediated cleavage at the 4A-2K site. Post-translationally, cleaved in post-Golgi vesicles by a host furin, releasing the mature small envelope protein M, and peptide pr. This cleavage is incomplete as up to 30% of viral particles still carry uncleaved prM. In terms of processing, N-glycosylated. N-glycosylated. The excreted form is glycosylated and this is required for efficient secretion of the protein from infected cells. Post-translationally, acetylated by host KAT5. Acetylation modulates NS3 RNA-binding and unwinding activities and plays an important positive role for viral replication. In terms of processing, sumoylation of RNA-directed RNA polymerase NS5 increases NS5 protein stability allowing proper viral RNA replication. Phosphorylated on serines residues. This phosphorylation may trigger NS5 nuclear localization.

The protein localises to the virion. It localises to the host nucleus. The protein resides in the host cytoplasm. It is found in the host perinuclear region. Its subcellular location is the secreted. The protein localises to the virion membrane. It localises to the host endoplasmic reticulum membrane. The protein resides in the host mitochondrion. The catalysed reaction is Selective hydrolysis of -Xaa-Xaa-|-Yaa- bonds in which each of the Xaa can be either Arg or Lys and Yaa can be either Ser or Ala.. It catalyses the reaction RNA(n) + a ribonucleoside 5'-triphosphate = RNA(n+1) + diphosphate. It carries out the reaction a ribonucleoside 5'-triphosphate + H2O = a ribonucleoside 5'-diphosphate + phosphate + H(+). The enzyme catalyses ATP + H2O = ADP + phosphate + H(+). The catalysed reaction is a 5'-end (5'-triphosphoguanosine)-ribonucleoside in mRNA + S-adenosyl-L-methionine = a 5'-end (N(7)-methyl 5'-triphosphoguanosine)-ribonucleoside in mRNA + S-adenosyl-L-homocysteine. It catalyses the reaction a 5'-end (N(7)-methyl 5'-triphosphoguanosine)-ribonucleoside in mRNA + S-adenosyl-L-methionine = a 5'-end (N(7)-methyl 5'-triphosphoguanosine)-(2'-O-methyl-ribonucleoside) in mRNA + S-adenosyl-L-homocysteine + H(+). Functionally, plays a role in virus budding by binding to the cell membrane and gathering the viral RNA into a nucleocapsid that forms the core of a mature virus particle. During virus entry, may induce genome penetration into the host cytoplasm after hemifusion induced by the surface proteins. Can migrate to the cell nucleus where it modulates host functions. Overcomes the anti-viral effects of host EXOC1 by sequestering and degrading the latter through the proteasome degradation pathway. In terms of biological role, inhibits RNA silencing by interfering with host Dicer. Its function is as follows. Prevents premature fusion activity of envelope proteins in trans-Golgi by binding to envelope protein E at pH6.0. After virion release in extracellular space, gets dissociated from E dimers. Acts as a chaperone for envelope protein E during intracellular virion assembly by masking and inactivating envelope protein E fusion peptide. prM is the only viral peptide matured by host furin in the trans-Golgi network probably to avoid catastrophic activation of the viral fusion activity in acidic Golgi compartment prior to virion release. prM-E cleavage is inefficient, and many virions are only partially matured. These uncleaved prM would play a role in immune evasion. Functionally, may play a role in virus budding. Exerts cytotoxic effects by activating a mitochondrial apoptotic pathway through M ectodomain. May display a viroporin activity. In terms of biological role, binds to host cell surface receptor and mediates fusion between viral and cellular membranes. Envelope protein is synthesized in the endoplasmic reticulum in the form of heterodimer with protein prM. They play a role in virion budding in the ER, and the newly formed immature particle is covered with 60 spikes composed of heterodimer between precursor prM and envelope protein E. The virion is transported to the Golgi apparatus where the low pH causes dissociation of PrM-E heterodimers and formation of E homodimers. prM-E cleavage is inefficient, and many virions are only partially matured. These uncleaved prM would play a role in immune evasion. Its function is as follows. Involved in immune evasion, pathogenesis and viral replication. Once cleaved off the polyprotein, is targeted to three destinations: the viral replication cycle, the plasma membrane and the extracellular compartment. Essential for viral replication. Required for formation of the replication complex and recruitment of other non-structural proteins to the ER-derived membrane structures. Excreted as a hexameric lipoparticle that plays a role against host immune response. Antagonizing the complement function. Binds to the host macrophages and dendritic cells. Inhibits signal transduction originating from Toll-like receptor 3 (TLR3). Mediates complement activation, which may contribute to the pathogenesis of the vascular leakage that occurs in severe dengue disease. Activates autophagy through the AMPK/ERK/mTOR signaling pathway. Mechanistically, acts as the assembly platform for STK11-AMPK interactions and promotes STK11-AMPK interactions. In turn, promotes phosphorylation of the AMPK kinase structural domain and activates AMPK, thereby positively regulating the AMPK/ERK/mTOR signaling pathway and inducing autophagy. Disrupts the host endothelial glycocalyx layer of host pulmonary microvascular endothelial cells, inducing degradation of sialic acid and shedding of heparan sulfate proteoglycans. NS1 induces expression of sialidases, heparanase, and activates cathepsin L, which activates heparanase via enzymatic cleavage. These effects are probably linked to the endothelial hyperpermeability observed in severe dengue disease. Functionally, component of the viral RNA replication complex that functions in virion assembly and antagonizes the host immune response. In terms of biological role, required cofactor for the serine protease function of NS3. May have membrane-destabilizing activity and form viroporins. Its function is as follows. Displays three enzymatic activities: serine protease, NTPase and RNA helicase. NS3 serine protease, in association with NS2B, performs its autocleavage and cleaves the polyprotein at dibasic sites in the cytoplasm: C-prM, NS2A-NS2B, NS2B-NS3, NS3-NS4A, NS4A-2K and NS4B-NS5. NS3 RNA helicase binds RNA and unwinds dsRNA in the 3' to 5' direction. Regulates the ATPase activity of the NS3 helicase activity. NS4A allows NS3 helicase to conserve energy during unwinding. Plays a role in the inhibition of the host innate immune response. Interacts with host MAVS and thereby prevents the interaction between RIGI and MAVS. In turn, IFN-beta production is impaired. Interacts with host AUP1 which mediates induction of lipophagy in host cells and facilitates production of virus progeny particles. Functionally, functions as a signal peptide for NS4B and is required for the interferon antagonism activity of the latter. In terms of biological role, induces the formation of ER-derived membrane vesicles where the viral replication takes place. Inhibits interferon (IFN)-induced host STAT1 phosphorylation and nuclear translocation, thereby preventing the establishment of cellular antiviral state by blocking the IFN-alpha/beta pathway. Its function is as follows. Replicates the viral (+) and (-) RNA genome, and performs the capping of genomes in the cytoplasm. NS5 methylates viral RNA cap at guanine N-7 and ribose 2'-O positions. Besides its role in RNA genome replication, also prevents the establishment of cellular antiviral state by blocking the interferon-alpha/beta (IFN-alpha/beta) signaling pathway. Inhibits host TYK2 and STAT2 phosphorylation, thereby preventing activation of JAK-STAT signaling pathway. May reduce immune responses by preventing the recruitment of the host PAF1 complex to interferon-responsive genes. The sequence is that of Genome polyprotein from Dengue virus type 2 (strain 16681-PDK53) (DENV-2).